The chain runs to 125 residues: Large ribosomal subunit protein bL12 (125 aa).

This sequence belongs to the bacterial ribosomal protein bL12 family. As to quaternary structure, homodimer. Part of the ribosomal stalk of the 50S ribosomal subunit. Forms a multimeric L10(L12)X complex, where L10 forms an elongated spine to which 2 to 4 L12 dimers bind in a sequential fashion. Binds GTP-bound translation factors.

Forms part of the ribosomal stalk which helps the ribosome interact with GTP-bound translation factors. Is thus essential for accurate translation. In Methylibium petroleiphilum (strain ATCC BAA-1232 / LMG 22953 / PM1), this protein is Large ribosomal subunit protein bL12.